The following is a 1198-amino-acid chain: Structural polyprotein (1198 aa).

Residues 2–15 are interaction with host EXOC1; that stretch reads TKKPGGPGKNRAIN. The Cytoplasmic portion of the chain corresponds to 2 to 109; sequence TKKPGGPGKN…RKQNKRGGNE (108 aa). Positions 37 to 72 are hydrophobic; homodimerization of capsid protein C; it reads LLDGRGPVRFVLALITFFKFTALAPTKALLGRWKAV. The propeptide at 106–127 is ER anchor for the capsid protein C, removed in mature form by serine protease NS3; that stretch reads GGNEGSIMWLASLAVVIAYAGA. Residues 110 to 130 form a helical membrane-spanning segment; sequence GSIMWLASLAVVIAYAGAMKL. The Extracellular segment spans residues 131-253; sequence SNFQGKLLMT…ATRYLMKTEN (123 aa). N142 is a glycosylation site (N-linked (GlcNAc...) asparagine; by host). The chain crosses the membrane as a helical span at residues 254–274; sequence WIIRNPGYAFLAATLGWMLGS. The Cytoplasmic segment spans residues 275–279; it reads NNGQR. A helical membrane pass occupies residues 280–294; the sequence is VVFTILLLLVAPAYS. At 295-746 the chain is on the extracellular side; the sequence is FNCLGMGNRD…QVFGGAFRTL (452 aa). Cystine bridges form between C297–C324, C354–C410, C354–C415, C368–C399, C386–C410, and C386–C415. The tract at residues 392–405 is fusion peptide; sequence DRGWGNGCGLFGKG. N448 is a glycosylation site (N-linked (GlcNAc...) asparagine; by host). Disulfide bonds link C484/C581 and C598/C629. A helical transmembrane segment spans residues 747-767; it reads FGGMSWITQGLMGALLLWMGV. The Cytoplasmic segment spans residues 768-773; it reads NARDRS. The helical transmembrane segment at 774–794 threads the bilayer; the sequence is IALAFLATGGVLVFLATNVHA. The Extracellular segment spans residues 795–1198; that stretch reads DTGCAIDITR…CADAWGHHLH (404 aa). Intrachain disulfides connect C798-C809, C849-C937, C973-C1017, C1074-C1123, C1085-C1106, and C1107-C1110. N924 and N1001 each carry an N-linked (GlcNAc...) asparagine; by host glycan. The interval 1152–1177 is disordered; the sequence is VDPFSAGPSGDVSGHPGGPSQEVDGQ.

In terms of assembly, homodimer. Interacts (via N-terminus) with host EXOC1 (via C-terminus); this interaction results in EXOC1 degradation through the proteasome degradation pathway. Interacts with host CAPRIN1; this interaction is involved in the suppression of the integrated stress response. As to quaternary structure, forms heterodimers with envelope protein E in the endoplasmic reticulum and Golgi. Homodimer; in the endoplasmic reticulum and Golgi. Interacts with protein prM. Interacts with non-structural protein 1. In terms of processing, genome polyprotein: Specific enzymatic cleavages in vivo yield mature proteins. Cleavages in the lumen of endoplasmic reticulum are performed by host signal peptidase, whereas cleavages in the cytoplasmic side are performed by serine protease NS3. Signal cleavage at the 2K-4B site requires a prior NS3 protease-mediated cleavage at the 4A-2K site. Post-translationally, cleaved in post-Golgi vesicles by a host furin, releasing the mature small envelope protein M, and peptide pr. This cleavage is incomplete as up to 30% of viral particles still carry uncleaved prM. N-glycosylated.

The protein resides in the secreted. The protein localises to the virion membrane. It localises to the host endoplasmic reticulum membrane. In terms of biological role, plays a role in virus budding by binding to the cell membrane and gathering the viral RNA into a nucleocapsid that forms the core of a mature virus particle. During virus entry, may induce genome penetration into the host cytoplasm after hemifusion induced by the surface proteins. Can migrate to the cell nucleus where it modulates host functions. Overcomes the anti-viral effects of host EXOC1 by sequestering and degrading the latter through the proteasome degradation pathway. Inhibits the integrated stress response (ISR) in the infected cell by binding to host CAPRIN1. Functionally, inhibits RNA silencing by interfering with host Dicer. Its function is as follows. Prevents premature fusion activity of envelope proteins in trans-Golgi by binding to envelope protein E at pH6.0. After virion release in extracellular space, gets dissociated from E dimers. Acts as a chaperone for envelope protein E during intracellular virion assembly by masking and inactivating envelope protein E fusion peptide. prM is the only viral peptide matured by host furin in the trans-Golgi network probably to avoid catastrophic activation of the viral fusion activity in acidic Golgi compartment prior to virion release. prM-E cleavage is inefficient, and many virions are only partially matured. These uncleaved prM would play a role in immune evasion. In terms of biological role, may play a role in virus budding. Exerts cytotoxic effects by activating a mitochondrial apoptotic pathway through M ectodomain. May display a viroporin activity. Functionally, binds to host cell surface receptor and mediates fusion between viral and cellular membranes. Envelope protein is synthesized in the endoplasmic reticulum in the form of heterodimer with protein prM. They play a role in virion budding in the ER, and the newly formed immature particle is covered with 60 spikes composed of heterodimer between precursor prM and envelope protein E. The virion is transported to the Golgi apparatus where the low pH causes dissociation of PrM-E heterodimers and formation of E homodimers. prM-E cleavage is inefficient, and many virions are only partially matured. These uncleaved prM would play a role in immune evasion. Its function is as follows. May play a role in neuroinvasiveness. The chain is Structural polyprotein from Japanese encephalitis virus (strain Jaoars982) (JEV).